We begin with the raw amino-acid sequence, 49 residues long: Large ribosomal subunit protein bL33 (49 aa).

Belongs to the bacterial ribosomal protein bL33 family.

This chain is Large ribosomal subunit protein bL33, found in Streptococcus suis (strain 98HAH33).